Here is a 633-residue protein sequence, read N- to C-terminus: Probable potassium transport system protein Kup 2 (633 aa).

The next 12 membrane-spanning stretches (helical) occupy residues 18–38, 61–81, 107–127, 143–163, 176–196, 211–231, 255–275, 293–313, 345–365, 371–391, 402–422, and 429–449; these read FVGLVVGAIGVVYGDIGTSPL, LISLMIWTLTIIVTFKYVLFL, VPVLFFAGLIGSALFIGDAMI, ITPAFAEYVPPLSAAIMIVLF, FFGPITVLWFFAMAAGGVIHI, ALSFLAHAGTVGLIVLGAVFL, WFVLVFPALLLNYLGQGALVL, ALLPVVLLATLATIIASQAVI, IYVPSVNLLLLTGVLMLIFSF, LATAYGISVTGAMVITTMLAF, FMLASAALLPLFVIEVVFLAA, and DGGWVPVALALAIMTLMWTWT.

Belongs to the HAK/KUP transporter (TC 2.A.72) family.

It is found in the cell inner membrane. It carries out the reaction K(+)(in) + H(+)(in) = K(+)(out) + H(+)(out). Its function is as follows. Transport of potassium into the cell. Likely operates as a K(+):H(+) symporter. This chain is Probable potassium transport system protein Kup 2, found in Rhizobium etli (strain ATCC 51251 / DSM 11541 / JCM 21823 / NBRC 15573 / CFN 42).